A 251-amino-acid chain; its full sequence is Zinc import ATP-binding protein ZnuC (251 aa).

An ABC transporter domain is found at V5–R220. Residue G37–S44 participates in ATP binding.

Belongs to the ABC transporter superfamily. Zinc importer (TC 3.A.1.15.5) family. As to quaternary structure, the complex is composed of two ATP-binding proteins (ZnuC), two transmembrane proteins (ZnuB) and a solute-binding protein (ZnuA).

It is found in the cell inner membrane. The enzyme catalyses Zn(2+)(out) + ATP(in) + H2O(in) = Zn(2+)(in) + ADP(in) + phosphate(in) + H(+)(in). Its function is as follows. Part of the ABC transporter complex ZnuABC involved in zinc import. Responsible for energy coupling to the transport system. This is Zinc import ATP-binding protein ZnuC from Escherichia coli O157:H7.